The chain runs to 71 residues: Large ribosomal subunit protein uL30 (71 aa).

It belongs to the universal ribosomal protein uL30 family. As to quaternary structure, part of the 50S ribosomal subunit.

This chain is Large ribosomal subunit protein uL30, found in Mycobacterium leprae (strain TN).